We begin with the raw amino-acid sequence, 459 residues long: DNA polymerase subunit gamma-2 (459 aa).

In terms of assembly, heterotrimer composed of a catalytic subunit and a homodimer of accessory subunits (POLG:POLG2).

Its subcellular location is the mitochondrion. The protein resides in the mitochondrion matrix. It localises to the mitochondrion nucleoid. In terms of biological role, accessory subunit of DNA polymerase gamma solely responsible for replication of mitochondrial DNA (mtDNA). Acts as an allosteric regulator of the holoenzyme activities. Enhances the polymerase activity and the processivity of POLG by increasing its interactions with the DNA template. Suppresses POLG exonucleolytic proofreading especially toward homopolymeric templates bearing mismatched termini. Binds to single-stranded DNA. In Mus musculus (Mouse), this protein is DNA polymerase subunit gamma-2 (Polg2).